A 362-amino-acid polypeptide reads, in one-letter code: 3-dehydroquinate synthase (362 aa).

NAD(+) contacts are provided by residues 71–76, 105–109, 129–130, Lys-142, Lys-151, and 169–172; these read DGEKYK, GVIGD, TT, and CLKT. Residues Glu-184, His-247, and His-264 each coordinate Zn(2+).

The protein belongs to the sugar phosphate cyclases superfamily. Dehydroquinate synthase family. It depends on Co(2+) as a cofactor. Zn(2+) is required as a cofactor. The cofactor is NAD(+).

The protein localises to the cytoplasm. The enzyme catalyses 7-phospho-2-dehydro-3-deoxy-D-arabino-heptonate = 3-dehydroquinate + phosphate. It functions in the pathway metabolic intermediate biosynthesis; chorismate biosynthesis; chorismate from D-erythrose 4-phosphate and phosphoenolpyruvate: step 2/7. Functionally, catalyzes the conversion of 3-deoxy-D-arabino-heptulosonate 7-phosphate (DAHP) to dehydroquinate (DHQ). The polypeptide is 3-dehydroquinate synthase (Citrobacter koseri (strain ATCC BAA-895 / CDC 4225-83 / SGSC4696)).